A 334-amino-acid chain; its full sequence is Heat-inducible transcription repressor HrcA (334 aa).

The protein belongs to the HrcA family.

Functionally, negative regulator of class I heat shock genes (grpE-dnaK-dnaJ and groELS operons). Prevents heat-shock induction of these operons. In Acidovorax sp. (strain JS42), this protein is Heat-inducible transcription repressor HrcA.